A 450-amino-acid chain; its full sequence is Phosphoglucosamine mutase (450 aa).

Serine 103 acts as the Phosphoserine intermediate in catalysis. Mg(2+)-binding residues include serine 103, aspartate 243, aspartate 245, and aspartate 247. Position 103 is a phosphoserine (serine 103).

The protein belongs to the phosphohexose mutase family. Mg(2+) is required as a cofactor. In terms of processing, activated by phosphorylation.

The catalysed reaction is alpha-D-glucosamine 1-phosphate = D-glucosamine 6-phosphate. Catalyzes the conversion of glucosamine-6-phosphate to glucosamine-1-phosphate. The chain is Phosphoglucosamine mutase from Lactobacillus delbrueckii subsp. bulgaricus (strain ATCC BAA-365 / Lb-18).